The primary structure comprises 150 residues: Large ribosomal subunit protein bL9 (150 aa).

Belongs to the bacterial ribosomal protein bL9 family.

Binds to the 23S rRNA. The protein is Large ribosomal subunit protein bL9 of Streptococcus agalactiae serotype III (strain NEM316).